A 301-amino-acid chain; its full sequence is Protoheme IX farnesyltransferase 2 (301 aa).

Transmembrane regions (helical) follow at residues 29 to 49 (VVAL…PTAV), 51 to 71 (VQPL…AAAL), 101 to 121 (ALIF…VLVN), 123 to 143 (LTAW…TAYL), 150 to 170 (NIVI…TAVT), 177 to 197 (ALLL…ALAI), 223 to 243 (CILL…LVGM), 244 to 264 (CGPM…YKAW), and 281 to 301 (FSIY…YLWS).

It belongs to the UbiA prenyltransferase family. Protoheme IX farnesyltransferase subfamily.

It is found in the cell inner membrane. The catalysed reaction is heme b + (2E,6E)-farnesyl diphosphate + H2O = Fe(II)-heme o + diphosphate. The protein operates within porphyrin-containing compound metabolism; heme O biosynthesis; heme O from protoheme: step 1/1. Converts heme B (protoheme IX) to heme O by substitution of the vinyl group on carbon 2 of heme B porphyrin ring with a hydroxyethyl farnesyl side group. This chain is Protoheme IX farnesyltransferase 2, found in Shewanella sp. (strain W3-18-1).